Reading from the N-terminus, the 451-residue chain is Glucose-6-phosphate isomerase (451 aa).

The Proton donor role is filled by Glu291. Catalysis depends on residues His312 and Lys426.

The protein belongs to the GPI family.

It is found in the cytoplasm. The enzyme catalyses alpha-D-glucose 6-phosphate = beta-D-fructose 6-phosphate. It participates in carbohydrate biosynthesis; gluconeogenesis. It functions in the pathway carbohydrate degradation; glycolysis; D-glyceraldehyde 3-phosphate and glycerone phosphate from D-glucose: step 2/4. In terms of biological role, catalyzes the reversible isomerization of glucose-6-phosphate to fructose-6-phosphate. This Thermoanaerobacter sp. (strain X514) protein is Glucose-6-phosphate isomerase.